The following is a 397-amino-acid chain: L-cysteine desulfidase (397 aa).

Cys23 acts as the Proton acceptor in catalysis. Residues Cys288, Cys330, and Cys337 each contribute to the [4Fe-4S] cluster site.

The protein belongs to the L-cysteine desulfidase family. In terms of assembly, homotrimer. Requires [4Fe-4S] cluster as cofactor.

The catalysed reaction is L-cysteine + H2O = hydrogen sulfide + pyruvate + NH4(+) + H(+). In terms of biological role, catalyzes the cleavage of L-cysteine to form 2-aminoprop-2-enoate and sulfide. The former then spontaneously hydrolyzes to pyruvate and NH(3). May be responsible for the production of sulfide required for the biosynthesis of iron-sulfur centers in this archaea. This Methanococcus maripaludis (strain C5 / ATCC BAA-1333) protein is L-cysteine desulfidase.